Reading from the N-terminus, the 160-residue chain is Small ribosomal subunit protein uS7 (160 aa).

It belongs to the universal ribosomal protein uS7 family. As to quaternary structure, part of the 30S ribosomal subunit. Contacts proteins S9 and S11.

Its function is as follows. One of the primary rRNA binding proteins, it binds directly to 16S rRNA where it nucleates assembly of the head domain of the 30S subunit. Is located at the subunit interface close to the decoding center, probably blocks exit of the E-site tRNA. This is Small ribosomal subunit protein uS7 from Hydrogenobaculum sp. (strain Y04AAS1).